The sequence spans 162 residues: Lipoprotein signal peptidase (162 aa).

A run of 4 helical transmembrane segments spans residues 12–32 (WFALAALVIVLDQISKLYFNS), 42–62 (VVEGFFNFTLVYNPGAAFSFL), 66–86 (GGWQKYLFTILAFAVSGWLGW), and 93–113 (FSGLMNLAAAFIMGGALGNVI). Residues aspartate 123 and aspartate 142 contribute to the active site. Residues 133–153 (WYYPAFNLADSFICVGAALMV) traverse the membrane as a helical segment.

This sequence belongs to the peptidase A8 family.

It is found in the cell inner membrane. It carries out the reaction Release of signal peptides from bacterial membrane prolipoproteins. Hydrolyzes -Xaa-Yaa-Zaa-|-(S,diacylglyceryl)Cys-, in which Xaa is hydrophobic (preferably Leu), and Yaa (Ala or Ser) and Zaa (Gly or Ala) have small, neutral side chains.. It participates in protein modification; lipoprotein biosynthesis (signal peptide cleavage). In terms of biological role, this protein specifically catalyzes the removal of signal peptides from prolipoproteins. The protein is Lipoprotein signal peptidase of Chromobacterium violaceum (strain ATCC 12472 / DSM 30191 / JCM 1249 / CCUG 213 / NBRC 12614 / NCIMB 9131 / NCTC 9757 / MK).